Consider the following 626-residue polypeptide: DNA-directed RNA polymerase subunit beta C-terminal section (626 aa).

Residues 287–307 (NTKSKNTGKGSKPPRASKAQN) form a disordered region.

This sequence belongs to the RNA polymerase beta chain family. In plastids the minimal PEP RNA polymerase catalytic core is composed of four subunits: alpha, beta, beta', and beta''. When a (nuclear-encoded) sigma factor is associated with the core the holoenzyme is formed, which can initiate transcription.

The protein localises to the plastid. Its subcellular location is the chloroplast. It catalyses the reaction RNA(n) + a ribonucleoside 5'-triphosphate = RNA(n+1) + diphosphate. In terms of biological role, DNA-dependent RNA polymerase catalyzes the transcription of DNA into RNA using the four ribonucleoside triphosphates as substrates. This Chlamydomonas reinhardtii (Chlamydomonas smithii) protein is DNA-directed RNA polymerase subunit beta C-terminal section (rpoB2).